The sequence spans 283 residues: Small ribosomal subunit protein uS2 (283 aa).

The interval 229–283 is disordered; it reads RSAGKSGEQPAEAEPMPDWERELLEGDGAKTEAKAEEPKAEAKKADEAPEAEKSN. The span at 246-283 shows a compositional bias: basic and acidic residues; sequence DWERELLEGDGAKTEAKAEEPKAEAKKADEAPEAEKSN.

This sequence belongs to the universal ribosomal protein uS2 family.

This chain is Small ribosomal subunit protein uS2, found in Cutibacterium acnes (strain DSM 16379 / KPA171202) (Propionibacterium acnes).